A 363-amino-acid polypeptide reads, in one-letter code: Phosphatidylinositol transfer protein sfh-5 (363 aa).

Residues 1 to 84 (MSTQPSDSAE…SPADIKDSVS (84 aa)) form a disordered region. The span at 36-46 (DAAKHAEEEPK) shows a compositional bias: basic and acidic residues. Low complexity predominate over residues 64 to 76 (KPAAAPAQEADSP). Residues 180-354 (AGDEPAVDEP…EYGGKGADLK (175 aa)) form the CRAL-TRIO domain. Heme-binding residues include Tyr-200, Arg-220, His-253, Tyr-255, and Lys-289.

The protein belongs to the SFH5 family. Heme b serves as cofactor.

Its subcellular location is the cytoplasm. It localises to the endoplasmic reticulum membrane. The protein resides in the microsome membrane. The enzyme catalyses a 1,2-diacyl-sn-glycero-3-phospho-(1D-myo-inositol)(in) = a 1,2-diacyl-sn-glycero-3-phospho-(1D-myo-inositol)(out). Non-classical phosphatidylinositol (PtdIns) transfer protein (PITP), which exhibits PtdIns-binding/transfer activity in the absence of detectable PtdCho-binding/transfer activity. Regulates PtdIns(4,5)P2 homeostasis at the plasma membrane. Heme-binding protein that may play a role in organic oxidant-induced stress responses. This is Phosphatidylinositol transfer protein sfh-5 (sfh-5) from Neurospora crassa (strain ATCC 24698 / 74-OR23-1A / CBS 708.71 / DSM 1257 / FGSC 987).